A 267-amino-acid chain; its full sequence is Glutamate racemase (267 aa).

Substrate contacts are provided by residues 10-11 and 42-43; these read DS and YG. The active-site Proton donor/acceptor is the Cys-73. 74-75 is a binding site for substrate; it reads NT. The active-site Proton donor/acceptor is the Cys-183. 184-185 is a binding site for substrate; that stretch reads TH.

Belongs to the aspartate/glutamate racemases family.

It carries out the reaction L-glutamate = D-glutamate. The protein operates within cell wall biogenesis; peptidoglycan biosynthesis. Provides the (R)-glutamate required for cell wall biosynthesis. The polypeptide is Glutamate racemase (Lactobacillus helveticus (strain DPC 4571)).